Here is a 106-residue protein sequence, read N- to C-terminus: Iron-sulfur cluster assembly protein CyaY (106 aa).

This sequence belongs to the frataxin family.

Involved in iron-sulfur (Fe-S) cluster assembly. May act as a regulator of Fe-S biogenesis. This Escherichia coli O127:H6 (strain E2348/69 / EPEC) protein is Iron-sulfur cluster assembly protein CyaY.